The chain runs to 305 residues: Methionyl-tRNA formyltransferase (305 aa).

(6S)-5,6,7,8-tetrahydrofolate is bound at residue serine 109–proline 112.

Belongs to the Fmt family.

The enzyme catalyses L-methionyl-tRNA(fMet) + (6R)-10-formyltetrahydrofolate = N-formyl-L-methionyl-tRNA(fMet) + (6S)-5,6,7,8-tetrahydrofolate + H(+). In terms of biological role, attaches a formyl group to the free amino group of methionyl-tRNA(fMet). The formyl group appears to play a dual role in the initiator identity of N-formylmethionyl-tRNA by promoting its recognition by IF2 and preventing the misappropriation of this tRNA by the elongation apparatus. In Paramagnetospirillum magneticum (strain ATCC 700264 / AMB-1) (Magnetospirillum magneticum), this protein is Methionyl-tRNA formyltransferase.